Reading from the N-terminus, the 879-residue chain is uncharacterized protein (879 aa).

Residues 14–34 traverse the membrane as a helical segment; it reads LAFFGCGVSVGAFFTLFLMGT.

The protein localises to the membrane. This is an uncharacterized protein from Mycoplasma pneumoniae (strain ATCC 29342 / M129 / Subtype 1) (Mycoplasmoides pneumoniae).